We begin with the raw amino-acid sequence, 508 residues long: Histidine ammonia-lyase (508 aa).

The 5-imidazolinone (Ala-Gly) cross-link spans 141 to 143 (ASG). Ser142 bears the 2,3-didehydroalanine (Ser) mark.

The protein belongs to the PAL/histidase family. Contains an active site 4-methylidene-imidazol-5-one (MIO), which is formed autocatalytically by cyclization and dehydration of residues Ala-Ser-Gly.

The protein resides in the cytoplasm. It carries out the reaction L-histidine = trans-urocanate + NH4(+). The protein operates within amino-acid degradation; L-histidine degradation into L-glutamate; N-formimidoyl-L-glutamate from L-histidine: step 1/3. The chain is Histidine ammonia-lyase from Geobacillus sp. (strain WCH70).